The primary structure comprises 191 residues: UPF0149 protein VV1_1551 (191 aa).

Belongs to the UPF0149 family.

The chain is UPF0149 protein VV1_1551 from Vibrio vulnificus (strain CMCP6).